The primary structure comprises 199 residues: Glycerol-3-phosphate acyltransferase (199 aa).

Helical transmembrane passes span 2 to 22, 77 to 97, 113 to 133, and 139 to 159; these read LEVL…GILV, PWVL…PVFL, IALA…VALA, and LAAM…GQPL.

It belongs to the PlsY family. In terms of assembly, probably interacts with PlsX.

It localises to the cell membrane. It carries out the reaction an acyl phosphate + sn-glycerol 3-phosphate = a 1-acyl-sn-glycero-3-phosphate + phosphate. It functions in the pathway lipid metabolism; phospholipid metabolism. In terms of biological role, catalyzes the transfer of an acyl group from acyl-phosphate (acyl-PO(4)) to glycerol-3-phosphate (G3P) to form lysophosphatidic acid (LPA). This enzyme utilizes acyl-phosphate as fatty acyl donor, but not acyl-CoA or acyl-ACP. This chain is Glycerol-3-phosphate acyltransferase, found in Rubrobacter xylanophilus (strain DSM 9941 / JCM 11954 / NBRC 16129 / PRD-1).